Here is a 411-residue protein sequence, read N- to C-terminus: Imidazolonepropionase (411 aa).

H78 and H80 together coordinate Fe(3+). Residues H78 and H80 each contribute to the Zn(2+) site. 4-imidazolone-5-propanoate-binding residues include R87, Y150, and H183. Y150 serves as a coordination point for N-formimidoyl-L-glutamate. H248 contributes to the Fe(3+) binding site. A Zn(2+)-binding site is contributed by H248. Q251 provides a ligand contact to 4-imidazolone-5-propanoate. A Fe(3+)-binding site is contributed by D322. D322 is a Zn(2+) binding site. N-formimidoyl-L-glutamate is bound by residues N324 and G326. S327 serves as a coordination point for 4-imidazolone-5-propanoate.

It belongs to the metallo-dependent hydrolases superfamily. HutI family. Requires Zn(2+) as cofactor. Fe(3+) is required as a cofactor.

It localises to the cytoplasm. The catalysed reaction is 4-imidazolone-5-propanoate + H2O = N-formimidoyl-L-glutamate. The protein operates within amino-acid degradation; L-histidine degradation into L-glutamate; N-formimidoyl-L-glutamate from L-histidine: step 3/3. Catalyzes the hydrolytic cleavage of the carbon-nitrogen bond in imidazolone-5-propanoate to yield N-formimidoyl-L-glutamate. It is the third step in the universal histidine degradation pathway. The sequence is that of Imidazolonepropionase from Christiangramia forsetii (strain DSM 17595 / CGMCC 1.15422 / KT0803) (Gramella forsetii).